Here is a 294-residue protein sequence, read N- to C-terminus: 4-hydroxy-tetrahydrodipicolinate synthase (294 aa).

T45 is a pyruvate binding site. Catalysis depends on Y133, which acts as the Proton donor/acceptor. The active-site Schiff-base intermediate with substrate is K161. I203 contacts pyruvate.

It belongs to the DapA family. Homotetramer; dimer of dimers.

It is found in the cytoplasm. The catalysed reaction is L-aspartate 4-semialdehyde + pyruvate = (2S,4S)-4-hydroxy-2,3,4,5-tetrahydrodipicolinate + H2O + H(+). Its pathway is amino-acid biosynthesis; L-lysine biosynthesis via DAP pathway; (S)-tetrahydrodipicolinate from L-aspartate: step 3/4. In terms of biological role, catalyzes the condensation of (S)-aspartate-beta-semialdehyde [(S)-ASA] and pyruvate to 4-hydroxy-tetrahydrodipicolinate (HTPA). This chain is 4-hydroxy-tetrahydrodipicolinate synthase, found in Shewanella baltica (strain OS223).